The chain runs to 149 residues: Endothelin-1 (149 aa).

Residues 1–33 (AAETVVSGAELSLTANSGGEKTPPHAPGLLRRS) constitute a propeptide that is removed on maturation. Residues 6-26 (VSGAELSLTANSGGEKTPPHA) form a disordered region. 2 cysteine pairs are disulfide-bonded: Cys36–Cys50 and Cys38–Cys46. A propeptide spanning residues 57 to 149 (VNTPGHIAPY…ISQQLGNGKK (93 aa)) is cleaved from the precursor. Positions 93-107 (CQCANQKDKKCWNFC) are endothelin-like.

The protein belongs to the endothelin/sarafotoxin family.

It localises to the secreted. Its function is as follows. Endothelins are endothelium-derived vasoconstrictor peptides. Probable ligand for G-protein coupled receptors EDNRA and EDNRB which activates PTK2B, BCAR1, BCAR3 and, GTPases RAP1 and RHOA cascade in glomerular mesangial cells. Also binds the DEAR/FBXW7-AS1 receptor. Promotes mesenteric arterial wall remodeling via activation of ROCK signaling and subsequent colocalization of NFATC3 with F-actin filaments. NFATC3 then translocates to the nucleus where it subsequently promotes the transcription of the smooth muscle hypertrophy and differentiation marker ACTA2. The sequence is that of Endothelin-1 (EDN1) from Cavia porcellus (Guinea pig).